The primary structure comprises 267 residues: MKSSESAAATASERRAETFQHKLEQFNPGIVWLDPQGHVSAFNDVALHILGPAGEQSLGVAQDHLFGIDVVQLHPEKSRDKLRFLLQSRDAGGCPVRSPPPVAMMINIPDRILMIKVSKMTGAAGTCGSCMIFYDVTDLTTEPSSQPAGASVPAPRRLFKIPVYRKSRVILIDLKDIVRFQGDGHYTTIVTKDERYLSNLSLADLELRLDSSVYLRVHRSHIVSLPYAVELVKLDESVNLVMDDAEQTQVPVSRSRTAQLKELLGVV.

The PAS domain maps to 15–86 (RAETFQHKLE…KSRDKLRFLL (72 aa)). The heme site is built by H74 and M104. The HTH LytTR-type domain maps to 161 to 266 (IPVYRKSRVI…TAQLKELLGV (106 aa)).

Heme is required as a cofactor.

The protein resides in the cytoplasm. One-component, b-type heme-containing aerobic sensor and transcriptional regulator that responds to CO by activating the expression of the oxidation operon cox. The sequence is that of Heme-containing CO-sensing transcriptional regulator RcoM 2 (rcoM2) from Paraburkholderia xenovorans (strain LB400).